The primary structure comprises 148 residues: Probable DNA-directed RNA polymerases I, II, and III subunit RPABC3 (148 aa).

The tract at residues 16–40 is non-specific ssDNA binding; the sequence is DPDGKKFDRVSRYFCDAESFKMELI.

This sequence belongs to the eukaryotic RPB8 RNA polymerase subunit family. Component of the RNA polymerase I (Pol I), RNA polymerase II (Pol II) and RNA polymerase III (Pol III) complexes consisting of at least 13, 12 and 17 subunits, respectively. Directly interacts with POLR2A.

It is found in the nucleus. Functionally, DNA-dependent RNA polymerase catalyzes the transcription of DNA into RNA using the four ribonucleoside triphosphates as substrates. Common component of RNA polymerases I, II and III which synthesize ribosomal RNA precursors, mRNA precursors and many functional non-coding RNAs, and small RNAs, such as 5S rRNA and tRNAs, respectively. The chain is Probable DNA-directed RNA polymerases I, II, and III subunit RPABC3 (rpb-8) from Caenorhabditis elegans.